The sequence spans 121 residues: DNA-directed RNA polymerase subunit omega (121 aa).

Positions 95 to 121 are disordered; the sequence is DGDAANDLQGEEDDLGLGLDEAEDLGF. Acidic residues predominate over residues 103 to 121; that stretch reads QGEEDDLGLGLDEAEDLGF.

The protein belongs to the RNA polymerase subunit omega family. As to quaternary structure, the RNAP catalytic core consists of 2 alpha, 1 beta, 1 beta' and 1 omega subunit. When a sigma factor is associated with the core the holoenzyme is formed, which can initiate transcription.

It carries out the reaction RNA(n) + a ribonucleoside 5'-triphosphate = RNA(n+1) + diphosphate. Functionally, promotes RNA polymerase assembly. Latches the N- and C-terminal regions of the beta' subunit thereby facilitating its interaction with the beta and alpha subunits. In Magnetococcus marinus (strain ATCC BAA-1437 / JCM 17883 / MC-1), this protein is DNA-directed RNA polymerase subunit omega.